A 504-amino-acid chain; its full sequence is Protein anon-37Cs (504 aa).

In terms of tissue distribution, low levels seen in adult heads, thorax, abdomen and ovaries, high levels in testes.

Its subcellular location is the cytoplasm. Its function is as follows. Has a non-vital function. The protein is Protein anon-37Cs (anon-37Cs) of Drosophila melanogaster (Fruit fly).